A 27-amino-acid chain; its full sequence is Weak neurotoxin E3 (27 aa).

In terms of tissue distribution, expressed by the venom gland.

It localises to the secreted. Binds to muscle nicotinic acetylcholine receptor (nAChR) and inhibit acetylcholine from binding to the receptor, thereby impairing neuromuscular transmission. The protein is Weak neurotoxin E3 of Micrurus pyrrhocryptus (Coral snake).